The following is a 601-amino-acid chain: MVLWGFFLRFRFFLTCGRNCIQKTLDSQDDAKDPGLHTFSHTHMRKAFLLMNDLRSHSRKMLCDVLLVAGEVEIPAHRVVLASCSPYFCAMFTGDMSESKANHVEIRDVDGQTLLKLVDYIYSAEIEVSEENVQVLLPAASLLQLMDVRQVCCDFLQTQLHPTNCLGIRAFADLHACTVLLSQAHAYAAEQHFTDVMVGEEFMALSLQQVCSLISSDKLTVSTEEKVFEAMVAWIKHDKEARLEHMPKLMEHVRLPLLSRDYLVQIVEEEPLIKNNNTCKDFLIEAMKYHLLPADQRHLIKTDRTRPRTPISLPKVMMVVGGQAPKAIRSVECYDFQEDRWYQVADLPSRRCRAGVVYMAGKVYAVGGFNGSLRVRTVDVYDGLKDQWSSIPSMQERRSTLGAAVLGDLLYAVGGFDGSTGLSSVEAYNPKANEWMFVAPMNTRRSSVGVGVVDGKLYAVGGYDGASRQCLSTVEEFNPVSNKWCYVSDMSTRRSGAGVGVLSGQLYAAGGHDGPLVRKSVEVYDPTTNTWRQVCDMNMCRRNAGVCAINGLLYVIGGDDGSCNLSSVEYYDPAADKWSLIPTNMSNGRSYAGVSVIDKPL.

The region spanning Cys-63–Glu-130 is the BTB domain. Residues Cys-165–Glu-268 enclose the BACK domain. Kelch repeat units follow at residues Val-316–Gly-361, Lys-362–Asp-408, Leu-410–Gly-455, Lys-456–Gly-504, Gln-505–Gly-551, and Leu-553–Lys-599.

The protein belongs to the KLHL3 family. In terms of assembly, component of the BCR(KLHL3) E3 ubiquitin ligase complex, at least composed of cul3 and klhl3 and rbx1.

The protein resides in the cytoplasm. It is found in the cytoskeleton. Its subcellular location is the cytosol. It functions in the pathway protein modification; protein ubiquitination. Substrate-specific adapter of a BCR (BTB-CUL3-RBX1) E3 ubiquitin ligase complex that acts as a regulator of ion transport in the distal nephron. The BCR(KLHL3) complex acts by mediating ubiquitination and degradation of WNK1 and WNK4, two activators of Na-Cl cotransporter SLC12A3/NCC in distal convoluted tubule cells of kidney, thereby regulating NaCl reabsorption. This Danio rerio (Zebrafish) protein is Kelch-like protein 3 (klhl3).